The following is a 374-amino-acid chain: WW domain-binding protein 4 (374 aa).

A Matrin-type zinc finger spans residues 11–42 (KFCDYCKCWIADNRPSVEFHERGKNHKENVAR). The span at 91–109 (EPTISPVTNTVQPTPTANQ) shows a compositional bias: polar residues. 2 disordered regions span residues 91–126 (EPTISPVTNTVQPTPTANQQKEKKKKKKKKEASKGR) and 188–328 (SKWE…EAGA). A compositionally biased stretch (basic residues) spans 112-121 (EKKKKKKKKE). WW domains lie at 121–154 (EASKGRWVEGVTADGHCYYYDLVTGASQWEKPEG) and 162–195 (TAAKAIWVEGLSEDGYTYYYNTETGESKWEKPDD). 2 stretches are compositionally biased toward basic and acidic residues: residues 188–197 (SKWEKPDDFI) and 205–270 (SSKD…EKTT). A phosphoserine mark is found at Ser219, Ser226, and Ser228. A compositionally biased stretch (polar residues) spans 315 to 325 (STENECLSSSE). Residues 355–373 (KKRRIENGKSRNLRQRGED) are interaction with SNRNP200.

Component of the spliceosome B complex. Associated with U2 snRNPs. Binds splicing factors SNRPB, SNRPC and SF1. Interacts via the WW domains with the Pro-rich domains of KHDRBS1/SAM68. Interacts via the WW domains with the Pro-rich domains of WBP11. Interacts with SNRNP200.

Its subcellular location is the nucleus. It localises to the nucleus speckle. Its function is as follows. Involved in pre-mRNA splicing as a component of the spliceosome. May play a role in cross-intron bridging of U1 and U2 snRNPs in the mammalian A complex. The chain is WW domain-binding protein 4 (Wbp4) from Rattus norvegicus (Rat).